A 395-amino-acid polypeptide reads, in one-letter code: Acetate kinase (395 aa).

A Mg(2+)-binding site is contributed by Asn-10. Lys-17 lines the ATP pocket. Position 87 (Arg-87) interacts with substrate. The Proton donor/acceptor role is filled by Asp-144. Residues 204–208 (HLGNG), 279–281 (DMR), and 327–331 (GIGEN) contribute to the ATP site. A Mg(2+)-binding site is contributed by Glu-381.

Belongs to the acetokinase family. As to quaternary structure, homodimer. Mg(2+) serves as cofactor. It depends on Mn(2+) as a cofactor.

It localises to the cytoplasm. It catalyses the reaction acetate + ATP = acetyl phosphate + ADP. It functions in the pathway metabolic intermediate biosynthesis; acetyl-CoA biosynthesis; acetyl-CoA from acetate: step 1/2. Its function is as follows. Catalyzes the formation of acetyl phosphate from acetate and ATP. Can also catalyze the reverse reaction. This is Acetate kinase from Stutzerimonas stutzeri (strain A1501) (Pseudomonas stutzeri).